Here is a 113-residue protein sequence, read N- to C-terminus: MHEMSLCEGIRGIVGDQARRHGFATVKVLRLEIGRFAGVEKAALGFAFDVVMRGSAAEGARLEILDLPGRALCYDCGEEAAIEDRFDPCPLCGGGRLMPVGGDEMRIKDMEVQ.

H2 serves as a coordination point for Ni(2+). The Zn(2+) site is built by C73, C76, C89, and C92.

The protein belongs to the HypA/HybF family.

In terms of biological role, involved in the maturation of [NiFe] hydrogenases. Required for nickel insertion into the metal center of the hydrogenase. In Cereibacter sphaeroides (strain ATCC 17023 / DSM 158 / JCM 6121 / CCUG 31486 / LMG 2827 / NBRC 12203 / NCIMB 8253 / ATH 2.4.1.) (Rhodobacter sphaeroides), this protein is Hydrogenase maturation factor HypA.